Reading from the N-terminus, the 463-residue chain is L-seryl-tRNA(Sec) selenium transferase (463 aa).

Lys295 bears the N6-(pyridoxal phosphate)lysine mark.

This sequence belongs to the SelA family. In terms of assembly, homodecamer; pentamer of dimers. Binds only one seryl-tRNA(Sec) per dimer. Pyridoxal 5'-phosphate is required as a cofactor.

It is found in the cytoplasm. It catalyses the reaction L-seryl-tRNA(Sec) + selenophosphate + H(+) = L-selenocysteinyl-tRNA(Sec) + phosphate. It participates in aminoacyl-tRNA biosynthesis; selenocysteinyl-tRNA(Sec) biosynthesis; selenocysteinyl-tRNA(Sec) from L-seryl-tRNA(Sec) (bacterial route): step 1/1. In terms of biological role, converts seryl-tRNA(Sec) to selenocysteinyl-tRNA(Sec) required for selenoprotein biosynthesis. The sequence is that of L-seryl-tRNA(Sec) selenium transferase from Edwardsiella ictaluri (strain 93-146).